A 517-amino-acid polypeptide reads, in one-letter code: Transmembrane protein 180 (517 aa).

Over 1–11 (MRLGGPWAWLL) the chain is Extracellular. The helical transmembrane segment at 12–43 (GLPTAVVYGSLALFVSVLHNVFLLYYVDTFVS) threads the bilayer. At 44-55 (VYKIDKAAFWVG) the chain is on the cytoplasmic side. The helical transmembrane segment at 56 to 74 (ETVFLLWNSLNDPLFGWLS) threads the bilayer. Residues 75–100 (DRQFLSSQPRSGAGLSSRAVVLARVR) lie on the Extracellular side of the membrane. The helical transmembrane segment at 101–118 (ALGWHGPLLALSFLAFWV) threads the bilayer. Residues 119-126 (PWAPAGLQ) lie on the Cytoplasmic side of the membrane. Residues 127–151 (FLLCLCLYDGFLTLVDLHHHALLAD) form a helical membrane-spanning segment. The Extracellular segment spans residues 152-155 (LALS). The chain crosses the membrane as a helical span at residues 156–179 (AHDRTHLNFYCSLFSAAGSLSVFA). Residues 180–191 (SYAFWNKEDFSS) are Cytoplasmic-facing. The chain crosses the membrane as a helical span at residues 192 to 223 (FRAFCLALATGSGLGFVGAARLLRRRVEAAGR). Topologically, residues 224–264 (EPGCPAMAVNDGLCEEELLVGGEEAGSITLGQYLQQLARHR) are extracellular. A helical transmembrane segment spans residues 265–292 (NFLWFVGMDLVQVFHCHFNSNFFPLFLE). The Cytoplasmic portion of the chain corresponds to 293–305 (HLLSDHISLSTGS). Residues 306–325 (FLLGISYVAPHLNNLYFLPL) traverse the membrane as a helical segment. The Extracellular segment spans residues 326–330 (CRRWG). Residues 331-350 (VYAVVRGLFLLKLGLSLLML) form a helical membrane-spanning segment. The Cytoplasmic portion of the chain corresponds to 351-358 (LAGPDHPG). A helical transmembrane segment spans residues 359 to 393 (LLCLFIASNRVFTEGTCKLLTLVVTDLVDEDLVLN). The Extracellular portion of the chain corresponds to 394 to 402 (HRKQAASAL). The chain crosses the membrane as a helical span at residues 403 to 429 (LFGMVALVTKPGQTFAPLLGTWLLCFY). The Cytoplasmic portion of the chain corresponds to 430 to 466 (TGHDLFQQHPPAPVGSAQPWPEPPAPPPAQAPPLRQG). A helical transmembrane segment spans residues 467-485 (CFYLLVLVPIACALLQLFT). Over 486–517 (WSQFTLHGRRLHMVKAQRQSLSRAQTLDVKMV) the chain is Extracellular.

The protein localises to the cell membrane. In Bos taurus (Bovine), this protein is Transmembrane protein 180.